The primary structure comprises 490 residues: Transmembrane protein 185-like (490 aa).

The span at 1 to 31 (MIENENTSLLSTSSSSTSSSPNNANSPSSLN) shows a compositional bias: low complexity. 2 disordered regions span residues 1–151 (MIEN…SKYK) and 455–490 (NMINNQDSSESESDDETEVSFKDREDEESEKLISNL). Residues 47–59 (TSGNNSPSAQITK) show a composition bias toward polar residues. Low complexity-rich tracts occupy residues 66–80 (SNNSSRNSSRPNSRS) and 89–108 (NNNNNNNNNNNNNNNNNNIN). Polar residues predominate over residues 109–125 (KHNSIVYNKSNNKLNSI). Residues 133 to 145 (QGGGGGNGNGNGN) are compositionally biased toward gly residues. Acidic residues predominate over residues 463–472 (SESESDDETE).

The protein belongs to the TMEM185 family.

This Dictyostelium discoideum (Social amoeba) protein is Transmembrane protein 185-like.